The following is a 414-amino-acid chain: TAR DNA-binding protein 43 (414 aa).

2 RRM domains span residues 104–200 (SDLI…RCTE) and 191–262 (RKVF…NAEP). A compositionally biased stretch (basic and acidic residues) spans 261–274 (EPKHNSNRQLERGG). Disordered regions lie at residues 261–303 (EPKH…GNNQ) and 341–373 (ASQQ…GNNS). Residues 275 to 303 (RFGGNPGGFGNQGGFGNSRGGGGGLGNNQ) are compositionally biased toward gly residues. The span at 342–373 (SQQNQSGPSGNNQPQGNMQREQNQGFSSGNNS) shows a compositional bias: low complexity.

In terms of assembly, homodimer.

Its subcellular location is the nucleus. The protein localises to the cytoplasm. The protein resides in the stress granule. It localises to the mitochondrion. In terms of biological role, probably involved in transcriptional repression. May play a role in the maintenance of the circadian clock periodicity. The protein is TAR DNA-binding protein 43 (TARDBP) of Gallus gallus (Chicken).